A 423-amino-acid chain; its full sequence is UPF0229 protein PSEEN0423 (423 aa).

The disordered stretch occupies residues 85-107 (GEHIARPQGGGGGGGRGKAGNSG). Residues 92 to 107 (QGGGGGGGRGKAGNSG) are compositionally biased toward gly residues.

This sequence belongs to the UPF0229 family.

The protein is UPF0229 protein PSEEN0423 of Pseudomonas entomophila (strain L48).